A 196-amino-acid chain; its full sequence is MDNHAAVREFDEERATAAIRELLIAVGEDPDREGLLETPARVARAYKETFAGLHEDPTTVLEKTFSEGHEELVLVREIPIYSMCEHHLVPFFGVAHIGYIPGKSGKVTGLSKLARLADMLAKRPQVQERLTSQIADALVEKLDAQAVAVVIEAEHLCMAMRGIRKPGAVTTTSAVRGGFKNNAASRAEVFSLIRGH.

Cys-84, His-87, and Cys-157 together coordinate Zn(2+).

Belongs to the GTP cyclohydrolase I family. In terms of assembly, toroid-shaped homodecamer, composed of two pentamers of five dimers.

It catalyses the reaction GTP + H2O = 7,8-dihydroneopterin 3'-triphosphate + formate + H(+). It functions in the pathway cofactor biosynthesis; 7,8-dihydroneopterin triphosphate biosynthesis; 7,8-dihydroneopterin triphosphate from GTP: step 1/1. This Corynebacterium glutamicum (strain R) protein is GTP cyclohydrolase 1.